We begin with the raw amino-acid sequence, 113 residues long: Cell cycle protein GpsB (113 aa).

A coiled-coil region spans residues 37-63 (KDYETYATLVKSLRQEIADLKEELTRK). The interval 61-82 (TRKPQVSSAPSPSHPDPIDVAA) is disordered.

The protein belongs to the GpsB family. In terms of assembly, forms polymers through the coiled coil domains. Interacts with PBP1, MreC and EzrA.

The protein resides in the cytoplasm. In terms of biological role, divisome component that associates with the complex late in its assembly, after the Z-ring is formed, and is dependent on DivIC and PBP2B for its recruitment to the divisome. Together with EzrA, is a key component of the system that regulates PBP1 localization during cell cycle progression. Its main role could be the removal of PBP1 from the cell pole after pole maturation is completed. Also contributes to the recruitment of PBP1 to the division complex. Not essential for septum formation. The sequence is that of Cell cycle protein GpsB from Streptococcus pneumoniae (strain ATCC 700669 / Spain 23F-1).